The chain runs to 357 residues: Uroporphyrinogen decarboxylase (357 aa).

Substrate-binding positions include 34 to 38, D83, Y158, S213, and H336; that span reads RQAGR.

Belongs to the uroporphyrinogen decarboxylase family. In terms of assembly, homodimer.

It is found in the cytoplasm. It carries out the reaction uroporphyrinogen III + 4 H(+) = coproporphyrinogen III + 4 CO2. Its pathway is porphyrin-containing compound metabolism; protoporphyrin-IX biosynthesis; coproporphyrinogen-III from 5-aminolevulinate: step 4/4. In terms of biological role, catalyzes the decarboxylation of four acetate groups of uroporphyrinogen-III to yield coproporphyrinogen-III. The sequence is that of Uroporphyrinogen decarboxylase from Mycolicibacterium paratuberculosis (strain ATCC BAA-968 / K-10) (Mycobacterium paratuberculosis).